Reading from the N-terminus, the 397-residue chain is Linalool dehydratase/isomerase (397 aa).

A signal peptide spans 1–26; that stretch reads MRFTLKTTAIVSAAALLAGFGPPPRA. The active-site Proton donor/acceptor is the aspartate 64. Disulfide bonds link cysteine 74-cysteine 127 and cysteine 196-cysteine 205. (2E)-geraniol is bound at residue cysteine 196.

In terms of assembly, homotetramer. Homopentamer.

It is found in the periplasm. It catalyses the reaction (S)-linalool = beta-myrcene + H2O. The catalysed reaction is (2E)-geraniol = (S)-linalool. Its pathway is terpene metabolism; monoterpene degradation. With respect to regulation, is inhibited by molecular oxygen, high salt concentrations (NaCl, KCl, or MgCl(2)), urea, and Ti(III)citrate. Activity is not affected by EDTA. Anaerobically catalyzes the stereospecific hydration of beta-myrcene to (3S)-linalool and the isomerization of (3S)-linalool to geraniol. Is thus involved in the initial steps of the anaerobic degradation of the monoterpene beta-myrcene. Also catalyzes the reverse reactions, i.e. the isomerization of geraniol to linalool and the dehydration of linalool to myrcene. In this direction, the formation of myrcene from geraniol may be seen as a detoxification process for the monoterpene alcohol. Shows a relatively broad substrate specificity and can use various geraniol and linalool derivatives. Substrates required a specific alpha-methylallyl alcohol signature motif. Neither the monoterpenes alpha- and beta-ocimene nor the monoterpenoids citronellol and nerol can be used as substrates. The polypeptide is Linalool dehydratase/isomerase (Castellaniella defragrans (strain DSM 12143 / CCUG 39792 / 65Phen) (Alcaligenes defragrans)).